An 896-amino-acid chain; its full sequence is Isoleucine--tRNA ligase (896 aa).

The 'HIGH' region motif lies at 57–67 (PYANNNIHIGH). Residue E543 coordinates L-isoleucyl-5'-AMP. The 'KMSKS' region signature appears at 584 to 588 (KMSKS). ATP is bound at residue K587. Zn(2+) contacts are provided by C869, C872, C885, and C888.

This sequence belongs to the class-I aminoacyl-tRNA synthetase family. IleS type 1 subfamily. In terms of assembly, monomer. Requires Zn(2+) as cofactor.

Its subcellular location is the cytoplasm. It carries out the reaction tRNA(Ile) + L-isoleucine + ATP = L-isoleucyl-tRNA(Ile) + AMP + diphosphate. In terms of biological role, catalyzes the attachment of isoleucine to tRNA(Ile). As IleRS can inadvertently accommodate and process structurally similar amino acids such as valine, to avoid such errors it has two additional distinct tRNA(Ile)-dependent editing activities. One activity is designated as 'pretransfer' editing and involves the hydrolysis of activated Val-AMP. The other activity is designated 'posttransfer' editing and involves deacylation of mischarged Val-tRNA(Ile). This Acholeplasma laidlawii (strain PG-8A) protein is Isoleucine--tRNA ligase.